The following is a 334-amino-acid chain: Trans-O-hydroxybenzylidenepyruvate hydratase-aldolase (334 aa).

Belongs to the DapA family.

The enzyme catalyses (3E)-4-(2-hydroxyphenyl)-2-oxobut-3-enoate + H2O = salicylaldehyde + pyruvate. Its pathway is aromatic compound metabolism; naphthalene degradation. In terms of biological role, involved in the naphthalene upper catabolic pathway. Catalyzes the transformation of trans-O-hydroxybenzylidenepyruvate (THBPA) to salicylaldehyde and pyruvate. The reaction is reversible. The protein is Trans-O-hydroxybenzylidenepyruvate hydratase-aldolase (pahE) of Pseudomonas aeruginosa.